We begin with the raw amino-acid sequence, 62 residues long: Small ribosomal subunit protein eS27 (62 aa).

Zn(2+) is bound by residues cysteine 17, cysteine 20, cysteine 36, and cysteine 39. The C4-type zinc finger occupies 17–39; that stretch reads CPDCENEQLVFEKATSVVECTVC.

It belongs to the eukaryotic ribosomal protein eS27 family. As to quaternary structure, part of the 30S ribosomal subunit. It depends on Zn(2+) as a cofactor.

The chain is Small ribosomal subunit protein eS27 from Methanocorpusculum labreanum (strain ATCC 43576 / DSM 4855 / Z).